Here is a 309-residue protein sequence, read N- to C-terminus: E3 ubiquitin-protein ligase SINAT5 (309 aa).

The RING-type zinc finger occupies 46–82; sequence CPVCTNSMYPPIHQCHNGHTLCSTCKSRVHNRCPTCR. Residues 96–289 form an SBD region; sequence VAESLELPCK…KELKLRVTGR (194 aa). The SIAH-type zinc finger occupies 99–159; it reads SLELPCKYYN…LVAHLRDDHK (61 aa). Zn(2+)-binding residues include cysteine 104, cysteine 111, histidine 123, cysteine 127, cysteine 134, cysteine 141, histidine 153, and histidine 158.

It belongs to the SINA (Seven in absentia) family. In terms of assembly, homodimer; homodimerization is essential for its function. Interacts with UBC28 and NAC021/NAC022. Interacts with SINAT6. Interacts with ATG6 and TRAF1A. Interacts with WAV3. Interacts with FREE1. Expressed at low level in the vascular tissue of mature roots. Expressed in lateral roots and in elongation zone of the main root upon stimulation by auxin. Colocalizes with NAC021/NAC022.

The protein resides in the nucleus. It is found in the cytoplasm. The catalysed reaction is S-ubiquitinyl-[E2 ubiquitin-conjugating enzyme]-L-cysteine + [acceptor protein]-L-lysine = [E2 ubiquitin-conjugating enzyme]-L-cysteine + N(6)-ubiquitinyl-[acceptor protein]-L-lysine.. The protein operates within protein modification; protein ubiquitination. Its function is as follows. E3 ubiquitin-protein ligase that mediates ubiquitination and subsequent proteasomal degradation of target proteins. E3 ubiquitin ligases accept ubiquitin from an E2 ubiquitin-conjugating enzyme in the form of a thioester and then directly transfers the ubiquitin to targeted substrates. Mediates the ubiquitination and proteasomal-dependent degradation of NAC021/NAC022, a transcription activator that functions downstream of the auxin signals, thereby acting as a down-regulator of auxin signals. Involved in the formation of lateral roots. Is antagonist to SINAT1, SINAT2, SINAT3 and SINAT4 by suppressing FREE1 ubiquitination and degradation mediated by SINAT1, SINAT2, SINAT3 and SINAT4, and promoting FREE1 accumulation. The sequence is that of E3 ubiquitin-protein ligase SINAT5 from Arabidopsis thaliana (Mouse-ear cress).